Here is a 248-residue protein sequence, read N- to C-terminus: 2,3-bisphosphoglycerate-dependent phosphoglycerate mutase (248 aa).

Substrate contacts are provided by residues 8–15 (RHGESIWN), 21–22 (TG), Arg-60, 87–90 (EKHY), Lys-98, 114–115 (RR), and 183–184 (GN). His-9 acts as the Tele-phosphohistidine intermediate in catalysis. The active-site Proton donor/acceptor is the Glu-87.

It belongs to the phosphoglycerate mutase family. BPG-dependent PGAM subfamily.

It carries out the reaction (2R)-2-phosphoglycerate = (2R)-3-phosphoglycerate. Its pathway is carbohydrate degradation; glycolysis; pyruvate from D-glyceraldehyde 3-phosphate: step 3/5. Functionally, catalyzes the interconversion of 2-phosphoglycerate and 3-phosphoglycerate. This is 2,3-bisphosphoglycerate-dependent phosphoglycerate mutase from Parabacteroides distasonis (strain ATCC 8503 / DSM 20701 / CIP 104284 / JCM 5825 / NCTC 11152).